Consider the following 328-residue polypeptide: Beta-ketoacyl-[acyl-carrier-protein] synthase III (328 aa).

Catalysis depends on residues Cys-122 and His-255. Positions 256 to 260 are ACP-binding; that stretch reads QANVR. Residue Asn-285 is part of the active site.

The protein belongs to the thiolase-like superfamily. FabH family. Homodimer.

Its subcellular location is the cytoplasm. It carries out the reaction malonyl-[ACP] + acetyl-CoA + H(+) = 3-oxobutanoyl-[ACP] + CO2 + CoA. The protein operates within lipid metabolism; fatty acid biosynthesis. In terms of biological role, catalyzes the condensation reaction of fatty acid synthesis by the addition to an acyl acceptor of two carbons from malonyl-ACP. Catalyzes the first condensation reaction which initiates fatty acid synthesis and may therefore play a role in governing the total rate of fatty acid production. Possesses both acetoacetyl-ACP synthase and acetyl transacylase activities. Its substrate specificity determines the biosynthesis of branched-chain and/or straight-chain of fatty acids. The protein is Beta-ketoacyl-[acyl-carrier-protein] synthase III of Bordetella pertussis (strain Tohama I / ATCC BAA-589 / NCTC 13251).